We begin with the raw amino-acid sequence, 146 residues long: UPF0178 protein BCAH187_A3092 (146 aa).

It belongs to the UPF0178 family.

This chain is UPF0178 protein BCAH187_A3092, found in Bacillus cereus (strain AH187).